Here is a 207-residue protein sequence, read N- to C-terminus: 5-nitrosalicylic acid 1,2-dioxygenase (207 aa).

In terms of domain architecture, Cupin type-2 spans Q85–I151.

It carries out the reaction 5-nitrosalicylate + O2 = 2-oxo-3-(5-oxofuran-2-ylidene)propanoate + nitrite + H(+). In terms of biological role, dioxygenase that catalyzes the cleavage of the aromatic ring of 5-nitrosalicylate (5NSA) without prior removal of the nitro group in biodegradation of 5-nitroanthranilate. This chain is 5-nitrosalicylic acid 1,2-dioxygenase (naaB), found in Bradyrhizobium sp.